A 167-amino-acid polypeptide reads, in one-letter code: MDLKQIEKLMIAMGRNGMKRFAIKREGLELELERDTREGNRQEPVFYDSRLFSGFSQERPIPTDPKKDTIKETTTENSETSTTTSSGDFISSPLVGTFYGSPAPDSPSFVKPGDIVSEDTIVCIVEAMKVMNEVKAGMSGRVLEVLITNGDPVQFGSKLFRIAKDAS.

A disordered region spans residues 53–91; it reads SGFSQERPIPTDPKKDTIKETTTENSETSTTTSSGDFIS. The span at 64–74 shows a compositional bias: basic and acidic residues; the sequence is DPKKDTIKETT. A compositionally biased stretch (low complexity) spans 75–86; that stretch reads TENSETSTTTSS. The region spanning 87–163 is the Biotinyl-binding domain; sequence GDFISSPLVG…QFGSKLFRIA (77 aa). Lysine 129 bears the N6-biotinyllysine mark.

Homodimer.

Its pathway is lipid metabolism; fatty acid biosynthesis. Its function is as follows. This protein is a component of the acetyl coenzyme A carboxylase complex; first, biotin carboxylase catalyzes the carboxylation of the carrier protein and then the transcarboxylase transfers the carboxyl group to form malonyl-CoA. This chain is Biotin carboxyl carrier protein of acetyl-CoA carboxylase (accB), found in Chlamydia pneumoniae (Chlamydophila pneumoniae).